Reading from the N-terminus, the 400-residue chain is Enoyl-[acyl-carrier-protein] reductase [NADH] (400 aa).

Residues 48 to 53, 74 to 75, 111 to 112, and 139 to 140 each bind NAD(+); these read GSSSGY, FE, DA, and LA. Tyr-225 lines the substrate pocket. Catalysis depends on Tyr-235, which acts as the Proton donor. NAD(+) is bound by residues Lys-244 and 273–275; that span reads VVT.

Belongs to the TER reductase family. Monomer.

The enzyme catalyses a 2,3-saturated acyl-[ACP] + NAD(+) = a (2E)-enoyl-[ACP] + NADH + H(+). It functions in the pathway lipid metabolism; fatty acid biosynthesis. In terms of biological role, involved in the final reduction of the elongation cycle of fatty acid synthesis (FAS II). Catalyzes the reduction of a carbon-carbon double bond in an enoyl moiety that is covalently linked to an acyl carrier protein (ACP). The chain is Enoyl-[acyl-carrier-protein] reductase [NADH] from Aliivibrio salmonicida (strain LFI1238) (Vibrio salmonicida (strain LFI1238)).